Here is a 167-residue protein sequence, read N- to C-terminus: Ribosome maturation factor RimM (167 aa).

In terms of domain architecture, PRC barrel spans 92–166 (DGVYYYRELL…EVRVELMEGL (75 aa)).

The protein belongs to the RimM family. As to quaternary structure, binds ribosomal protein uS19.

Its subcellular location is the cytoplasm. Its function is as follows. An accessory protein needed during the final step in the assembly of 30S ribosomal subunit, possibly for assembly of the head region. Essential for efficient processing of 16S rRNA. May be needed both before and after RbfA during the maturation of 16S rRNA. It has affinity for free ribosomal 30S subunits but not for 70S ribosomes. The chain is Ribosome maturation factor RimM from Lactobacillus delbrueckii subsp. bulgaricus (strain ATCC 11842 / DSM 20081 / BCRC 10696 / JCM 1002 / NBRC 13953 / NCIMB 11778 / NCTC 12712 / WDCM 00102 / Lb 14).